The sequence spans 96 residues: Large ribosomal subunit protein uL4 (96 aa).

The tract at residues 77–96 (RAPNKKVKRRELKKNPLKNL) is disordered. Over residues 79–96 (PNKKVKRRELKKNPLKNL) the composition is skewed to basic residues.

Belongs to the universal ribosomal protein uL4 family. In terms of assembly, component of the large ribosomal subunit.

It localises to the cytoplasm. Functionally, component of the large ribosomal subunit. The ribosome is a large ribonucleoprotein complex responsible for the synthesis of proteins in the cell. This is Large ribosomal subunit protein uL4 (rpl4) from Xenopus tropicalis (Western clawed frog).